We begin with the raw amino-acid sequence, 387 residues long: Phosphoglycerate kinase (387 aa).

Substrate is bound by residues 21–23 (DLN), Arg36, 59–62 (HLGR), Arg113, and Arg146. ATP-binding positions include Lys197, Glu314, and 340–343 (GGDT).

It belongs to the phosphoglycerate kinase family. In terms of assembly, monomer.

The protein resides in the cytoplasm. The enzyme catalyses (2R)-3-phosphoglycerate + ATP = (2R)-3-phospho-glyceroyl phosphate + ADP. Its pathway is carbohydrate degradation; glycolysis; pyruvate from D-glyceraldehyde 3-phosphate: step 2/5. This chain is Phosphoglycerate kinase, found in Klebsiella pneumoniae (strain 342).